The following is a 378-amino-acid chain: MNKPLRNSHPLFKIANNALVDLPAPINISSWWNFGSLLGLCLIIQILTGLFLAMHYTADINLAFYSVNHICRDVNYGWLLRTLHANGASFFFICIYLHVGRGIYYGSYMFTPTWLIGVIILFLVMGTAFMGYVLPWGQMSFWGATVITNLLSAIPYLGMDLVQWLWGGFAVDNATLTRFFTFHFILPFIVLAMTMIHLLFLHQTGSNNPIGLNSNIDKIPFHPYFTFKDIVGFTVMIFILISLVLISPNLLGDPDNFIPANPLVTPAHIQPEWYFLFAYAILRSIPNKLGGVIALVLSIAILMILPFYNLSKFRGIQFYPINQVMFWSMLVTVILLTWIGARPVEEPYVLIGQILTVMYFLYYLVNPLITKWWDNLLN.

A run of 4 helical transmembrane segments spans residues 34–54, 78–99, 114–134, and 179–199; these read FGSLLGLCLIIQILTGLFLAM, WLLRTLHANGASFFFICIYLHV, WLIGVIILFLVMGTAFMGYVL, and FFTFHFILPFIVLAMTMIHLL. Residues His-84 and His-98 each contribute to the heme b site. The heme b site is built by His-183 and His-197. An a ubiquinone-binding site is contributed by His-202. 4 helical membrane-spanning segments follow: residues 227 to 247, 289 to 309, 321 to 341, and 348 to 368; these read FKDIVGFTVMIFILISLVLIS, LGGVIALVLSIAILMILPFYN, INQVMFWSMLVTVILLTWIGA, and YVLIGQILTVMYFLYYLVNPL.

The protein belongs to the cytochrome b family. As to quaternary structure, the main subunits of complex b-c1 are: cytochrome b, cytochrome c1 and the Rieske protein. The cofactor is heme b.

The protein localises to the mitochondrion inner membrane. Functionally, component of the ubiquinol-cytochrome c reductase complex (complex III or cytochrome b-c1 complex) that is part of the mitochondrial respiratory chain. The b-c1 complex mediates electron transfer from ubiquinol to cytochrome c. Contributes to the generation of a proton gradient across the mitochondrial membrane that is then used for ATP synthesis. In Drosophila sechellia (Fruit fly), this protein is Cytochrome b (mt:Cyt-b).